A 314-amino-acid chain; its full sequence is tRNA dimethylallyltransferase (314 aa).

40 to 47 lines the ATP pocket; it reads GPTASGKS. 42-47 lines the substrate pocket; it reads TASGKS.

Belongs to the IPP transferase family. Monomer. It depends on Mg(2+) as a cofactor.

It catalyses the reaction adenosine(37) in tRNA + dimethylallyl diphosphate = N(6)-dimethylallyladenosine(37) in tRNA + diphosphate. In terms of biological role, catalyzes the transfer of a dimethylallyl group onto the adenine at position 37 in tRNAs that read codons beginning with uridine, leading to the formation of N6-(dimethylallyl)adenosine (i(6)A). This is tRNA dimethylallyltransferase from Cereibacter sphaeroides (strain KD131 / KCTC 12085) (Rhodobacter sphaeroides).